A 577-amino-acid polypeptide reads, in one-letter code: MPTLAERLGSSAANASGSDKSSHDREQELRSRLFASKQTSRNTAHQDLASSERRSIDRELPLASRHRSRSPLSSPQNGSSPRRQRGSPSYENQPSTVSARMPPPPQPYIHPDRRPPRPQADRWVPPPREDVQSDRSPRSYPRRRDDQRWQANERRANQDDSRRAWTSSRSGDRRRYFDSNDDRNPRQEDREAPSEYGAAQWKRLQRDPYASSMSSGGNQGDGNGGFFSSRNEQRKKSTISIWPPSPPHPTLDSDEEREKRKRHRDSSSRHRDKDKDKDRDKDKGKRDRKHSSSDKHHSSSRSHRHHSSTSRRRRSSRHSEDDKASRHRHTRSSRSHHRDDDDDDDDEDVDVDGRRKSKRSRTKVSDGSDSGRSESETDSDSDARSSRHRRRHHKSDRSSTHRRRESEKRHRSSGQRSESESSLHSEHNQKETAKSRRDSVSASASDSDVEVGPTLPTVAADGKPVDPRAYGGALLPGEGSAMASYVQDGKRIPRRGEIGLTSDQIEAYEKAGYVMSGSRHHRMNAVRMRKENQVISAEEKRTMLRLQAEEKAKKEREIVSQFKELVDTLQPGSSEAK.

The interval 1 to 479 is disordered; it reads MPTLAERLGS…YGGALLPGEG (479 aa). Residues 20–31 show a composition bias toward basic and acidic residues; sequence KSSHDREQELRS. The span at 36–49 shows a compositional bias: polar residues; that stretch reads SKQTSRNTAHQDLA. Positions 50-60 are enriched in basic and acidic residues; that stretch reads SSERRSIDREL. Over residues 70 to 89 the composition is skewed to low complexity; it reads SPLSSPQNGSSPRRQRGSPS. Composition is skewed to basic and acidic residues over residues 127–163, 170–193, and 265–297; these read PREDVQSDRSPRSYPRRRDDQRWQANERRANQDDSRR, SGDRRRYFDSNDDRNPRQEDREAP, and DSSSRHRDKDKDKDRDKDKGKRDRKHSSSDKHH. 2 stretches are compositionally biased toward basic residues: residues 298–316 and 325–336; these read SSSRSHRHHSSTSRRRRSS and SRHRHTRSSRSH. The span at 340–350 shows a compositional bias: acidic residues; sequence DDDDDDDEDVD. A compositionally biased stretch (basic and acidic residues) spans 363 to 385; the sequence is KVSDGSDSGRSESETDSDSDARS. Residues 386-395 show a composition bias toward basic residues; that stretch reads SRHRRRHHKS. Composition is skewed to basic and acidic residues over residues 396–408 and 417–439; these read DRSSTHRRRESEK and SESESSLHSEHNQKETAKSRRDS. Residues 529 to 570 are a coiled coil; it reads RKENQVISAEEKRTMLRLQAEEKAKKEREIVSQFKELVDTLQ.

The protein belongs to the NKAP family.

In Mycosarcoma maydis (Corn smut fungus), this protein is NKAP family protein UM04995.